A 205-amino-acid chain; its full sequence is Urease accessory protein UreG (205 aa).

14–21 contributes to the GTP binding site; the sequence is GPVGSGKT.

Belongs to the SIMIBI class G3E GTPase family. UreG subfamily. Homodimer. UreD, UreF and UreG form a complex that acts as a GTP-hydrolysis-dependent molecular chaperone, activating the urease apoprotein by helping to assemble the nickel containing metallocenter of UreC. The UreE protein probably delivers the nickel.

It is found in the cytoplasm. In terms of biological role, facilitates the functional incorporation of the urease nickel metallocenter. This process requires GTP hydrolysis, probably effectuated by UreG. This is Urease accessory protein UreG from Citrobacter koseri (strain ATCC BAA-895 / CDC 4225-83 / SGSC4696).